A 640-amino-acid polypeptide reads, in one-letter code: 1,4-alpha-glucan branching enzyme GlgB (640 aa).

Aspartate 318 acts as the Nucleophile in catalysis. Glutamate 371 serves as the catalytic Proton donor.

It belongs to the glycosyl hydrolase 13 family. GlgB subfamily. As to quaternary structure, monomer.

The catalysed reaction is Transfers a segment of a (1-&gt;4)-alpha-D-glucan chain to a primary hydroxy group in a similar glucan chain.. It participates in glycan biosynthesis; glycogen biosynthesis. Functionally, catalyzes the formation of the alpha-1,6-glucosidic linkages in glycogen by scission of a 1,4-alpha-linked oligosaccharide from growing alpha-1,4-glucan chains and the subsequent attachment of the oligosaccharide to the alpha-1,6 position. This chain is 1,4-alpha-glucan branching enzyme GlgB, found in Francisella philomiragia subsp. philomiragia (strain ATCC 25017 / CCUG 19701 / FSC 153 / O#319-036).